Consider the following 147-residue polypeptide: Proteinase inhibitor type-2 T (147 aa).

The signal sequence occupies residues 1–25 (MAVHKEVSFVAYLLIVLGMFLYVDA). A run of 2 repeats spans residues 25 to 82 (ALGC…PKNP) and 83 to 142 (KACP…EPKP). Cystine bridges form between cysteine 28–cysteine 116, cysteine 32–cysteine 112, cysteine 40–cysteine 122, cysteine 52–cysteine 89, cysteine 55–cysteine 73, cysteine 56–cysteine 85, cysteine 62–cysteine 98, and cysteine 115–cysteine 133.

This sequence belongs to the protease inhibitor I20 (potato type II proteinase inhibitor) family.

Its function is as follows. Inhibitor of trypsin and chymotrypsin. The chain is Proteinase inhibitor type-2 T (PIN2T) from Solanum tuberosum (Potato).